A 718-amino-acid polypeptide reads, in one-letter code: MMFRDQVGVLAGWFKGWNECEQTVALLSLLKRVSQTQARFLQLCLEHSLADCVELHVLEREANSPGIINQWQQESKDKVISLLLTHLPLLKPGNLDAKVEYMKLLPKILAHSIEHNQHIEESRQLLSYALIHPATSLEDRSALAMWLNHLEDRTSTSFGGQNRGRSDSVDYGQTHYYHQRQNSDDKLNGWQNSRDSGICINASNWQDKSMGCENGHVPLYSSSSVPTTINTIGTSTSTILSGQAHHSPLKRSVSLTPPMNVPNQPLGHGWMSHEDLRARGPQCLPSDHAPLSPQSSVASSGSGGSEHLEDQATARNTFQEEGSGMKDVPAWLKSLRLHKYAALFSQMTYEEMMALTECQLEAQNVTKGARHKIVISIQKLKERQNLLKSLERDIIEGGSLRVPLQELHQMILTPIKAYGSPSTTPEARPREPQAPRQPSLMGPESQSPDCKDGATATGATATPSAGASGGLQPHQLSSCDGELAVAPLPEGDLPGQFTRVMGKVCTQLLVSRPDEENISSYLQLIDKRLIHEAFTETQKKRLLSWKQQVQKLFRSFPRKTLLDISGYRQQRNRGFGQSDSLPTAGSMGSGMGRRNPRQYQIPSRNVPSARLGLLGTSGFVSSNQRNTTAAPTIMKQGRQNLWFANPGGSNSMPSRTHSSVQRTRSLPVHTSPQNMLMFQQPEFQLPVTEPDINNRLESLCLSMTEHALGDGVDRTSTI.

Position 168 is a phosphoserine (Ser-168). Residues 278 to 310 (ARGPQCLPSDHAPLSPQSSVASSGSGGSEHLED) are disordered. The SAM domain maps to 323–396 (SGMKDVPAWL…LKSLERDIIE (74 aa)). Disordered regions lie at residues 417 to 474 (AYGS…LQPH) and 572 to 601 (NRGF…QYQI). The residue at position 420 (Ser-420) is a Phosphoserine. Thr-424 bears the Phosphothreonine mark. The segment covering 453 to 466 (GATATGATATPSAG) has biased composition (low complexity). At Arg-573 the chain carries Omega-N-methylarginine. Ser-580 carries the phosphoserine modification.

It belongs to the SMAUG family.

The protein resides in the cytoplasm. The protein localises to the cell projection. It is found in the dendrite. It localises to the synapse. Its subcellular location is the synaptosome. In terms of biological role, acts as a translational repressor of SRE-containing messengers. This Macaca fascicularis (Crab-eating macaque) protein is Protein Smaug homolog 1 (SAMD4A).